Here is a 163-residue protein sequence, read N- to C-terminus: uncharacterized protein (163 aa).

This is an uncharacterized protein from Shigella flexneri.